A 687-amino-acid chain; its full sequence is Glycine--tRNA ligase beta subunit (687 aa).

Belongs to the class-II aminoacyl-tRNA synthetase family. In terms of assembly, tetramer of two alpha and two beta subunits.

It localises to the cytoplasm. It catalyses the reaction tRNA(Gly) + glycine + ATP = glycyl-tRNA(Gly) + AMP + diphosphate. This is Glycine--tRNA ligase beta subunit from Neisseria gonorrhoeae (strain NCCP11945).